The sequence spans 447 residues: N-succinylarginine dihydrolase (447 aa).

Residues 19–28, N110, and 137–138 each bind substrate; these read AGLSFGNEAS and HR. The active site involves E174. R212 is a binding site for substrate. The active site involves H248. Substrate-binding residues include D250 and N359. Residue C365 is the Nucleophile of the active site.

It belongs to the succinylarginine dihydrolase family. In terms of assembly, homodimer.

The catalysed reaction is N(2)-succinyl-L-arginine + 2 H2O + 2 H(+) = N(2)-succinyl-L-ornithine + 2 NH4(+) + CO2. It participates in amino-acid degradation; L-arginine degradation via AST pathway; L-glutamate and succinate from L-arginine: step 2/5. Catalyzes the hydrolysis of N(2)-succinylarginine into N(2)-succinylornithine, ammonia and CO(2). The polypeptide is N-succinylarginine dihydrolase (Salmonella enteritidis PT4 (strain P125109)).